A 305-amino-acid chain; its full sequence is Dermonecrotic toxin LrSicTox-alphaIA1ii (305 aa).

A signal peptide spans 1 to 18 (MLLYVTLILGCWSAFSES). A propeptide spanning residues 19 to 26 (AETDVAER) is cleaved from the precursor. The active site involves His37. Mg(2+) contacts are provided by Glu57 and Asp59. Residue His73 is the Nucleophile of the active site. 2 disulfides stabilise this stretch: Cys77/Cys83 and Cys79/Cys222. Position 117 (Asp117) interacts with Mg(2+). A glycan (N-linked (GlcNAc...) asparagine) is linked at Asn282.

It belongs to the arthropod phospholipase D family. Class II subfamily. Class IIa sub-subfamily. The cofactor is Mg(2+). Expressed by the venom gland.

The protein resides in the secreted. The catalysed reaction is an N-(acyl)-sphingosylphosphocholine = an N-(acyl)-sphingosyl-1,3-cyclic phosphate + choline. It carries out the reaction an N-(acyl)-sphingosylphosphoethanolamine = an N-(acyl)-sphingosyl-1,3-cyclic phosphate + ethanolamine. It catalyses the reaction a 1-acyl-sn-glycero-3-phosphocholine = a 1-acyl-sn-glycero-2,3-cyclic phosphate + choline. The enzyme catalyses a 1-acyl-sn-glycero-3-phosphoethanolamine = a 1-acyl-sn-glycero-2,3-cyclic phosphate + ethanolamine. With respect to regulation, inhibited with low affinity by edelfosine. In terms of biological role, dermonecrotic toxins cleave the phosphodiester linkage between the phosphate and headgroup of certain phospholipids (sphingolipid and lysolipid substrates), forming an alcohol (often choline) and a cyclic phosphate. This toxin acts on sphingomyelin (SM). It also acts on a broad range of lysophospholipids, like lysophosphatidylinositol (LPI), lysophosphatidylglycerol (LPG), lysophosphatidylethanolamine (LPE), lysobisphosphatidic acid (LBPA), lysophosphatidylserine (LPS) and lysophosphatidylcholines (LPC) of varying chain lengths. The substrate preference is LPI &gt; LPG &gt; LPS &gt; LPC &gt;&gt; LPE, LBPA. Furthermore, the enzyme also act on cyclic phosphatidic acid and lyso-platelet activating factor (LPAF, an alkyl-LPC). The enzyme does not act on sphingosylphosphorylcholine (SPC, also known as lyso-sphingomyelin) and PAF. The toxin may also act on ceramide phosphoethanolamine (CPE). It acts by transphosphatidylation, releasing exclusively cyclic phosphate products as second products. It does not exhibit detectable PLA1/2 activity. It induces dose-dependent hemolysis and dermonecrosis. Also induces increased vascular permeability, edema, inflammatory response, and platelet aggregation. This is Dermonecrotic toxin LrSicTox-alphaIA1ii from Loxosceles reclusa (Brown recluse spider).